We begin with the raw amino-acid sequence, 260 residues long: UPF0246 protein Tola_0968 (260 aa).

The protein belongs to the UPF0246 family.

This chain is UPF0246 protein Tola_0968, found in Tolumonas auensis (strain DSM 9187 / NBRC 110442 / TA 4).